The following is a 156-amino-acid chain: Small ribosomal subunit protein uS7 (156 aa).

This sequence belongs to the universal ribosomal protein uS7 family. In terms of assembly, part of the 30S ribosomal subunit. Contacts proteins S9 and S11.

One of the primary rRNA binding proteins, it binds directly to 16S rRNA where it nucleates assembly of the head domain of the 30S subunit. Is located at the subunit interface close to the decoding center, probably blocks exit of the E-site tRNA. This chain is Small ribosomal subunit protein uS7, found in Limosilactobacillus reuteri (strain DSM 20016) (Lactobacillus reuteri).